The primary structure comprises 248 residues: Membrane-spanning 4-domains subfamily A member 6A (248 aa).

At 1–46 (MTSQPVPNETIIVLPSNVINFSQAEKPEPTNQGQDSLKKHLHAEIK) the chain is on the cytoplasmic side. The helical transmembrane segment at 47–67 (VIGTIQILCGMMVLSLGIILA) threads the bilayer. The Extracellular portion of the chain corresponds to 68 to 84 (SASFSPNFTQVTSTLLN). A helical transmembrane segment spans residues 85 to 105 (SAYPFIGPFFFIISGSLSIAT). Residues 106–116 (EKRLTKLLVHS) are Cytoplasmic-facing. A helical membrane pass occupies residues 117-137 (SLVGSILSALSALVGFIILSV). The Extracellular segment spans residues 138 to 185 (KQATLNPASLQCELDKNNIPTRSYVSYFYHDSLYTTDCYTAKASLAGT). Residues 186 to 206 (LSLMLICTLLEFCLAVLTAVL) form a helical membrane-spanning segment. At 207-248 (RWKQAYSDFPGSVLFLPHSYIGNSGMSSKMTHDCGYEELLTS) the chain is on the cytoplasmic side.

The protein belongs to the MS4A family. Variable expression in some B-cell, myelomonocytic, and erythroleukemia cell lines.

Its subcellular location is the membrane. Its function is as follows. May be involved in signal transduction as a component of a multimeric receptor complex. The polypeptide is Membrane-spanning 4-domains subfamily A member 6A (MS4A6A) (Homo sapiens (Human)).